Here is a 304-residue protein sequence, read N- to C-terminus: D-alanine--D-alanine ligase (304 aa).

The region spanning 103 to 299 (KLIWQALGLP…FADLCIEILK (197 aa)) is the ATP-grasp domain. 129-184 (EEKLGLPMFVKPAAEGSSVGVVKVKGKGRLKSVYEELKHLQGEIIAERFIGGGEYS) is an ATP binding site. 3 residues coordinate Mg(2+): D253, E266, and N268.

It belongs to the D-alanine--D-alanine ligase family. Mg(2+) is required as a cofactor. Mn(2+) serves as cofactor.

Its subcellular location is the cytoplasm. The catalysed reaction is 2 D-alanine + ATP = D-alanyl-D-alanine + ADP + phosphate + H(+). The protein operates within cell wall biogenesis; peptidoglycan biosynthesis. Cell wall formation. The polypeptide is D-alanine--D-alanine ligase (Neisseria meningitidis serogroup C / serotype 2a (strain ATCC 700532 / DSM 15464 / FAM18)).